A 530-amino-acid polypeptide reads, in one-letter code: Membrane-associated transporter protein (530 aa).

Over 1–46 (MGSNSGQAGRHIYKSLADDGPFDSVEPPKRPTSRLIMHSMAMFGRE) the chain is Cytoplasmic. Residues 47 to 67 (FCYAVEAAYVTPVLLSVGLPS) traverse the membrane as a helical segment. S68 is a topological domain (extracellular). A helical transmembrane segment spans residues 69–89 (LYSIVWFLSPILGFLLQPVVG). At 90-110 (SASDHCRSRWGRRRPYILTLG) the chain is on the cytoplasmic side. A helical transmembrane segment spans residues 111–131 (VMMLVGMALYLNGATVVAALI). Residues 132–138 (ANPRRKL) lie on the Extracellular side of the membrane. The chain crosses the membrane as a helical span at residues 139–159 (VWAISVTMIGVVLFDFAADFI). Residues 160–184 (DGPIKAYLFDVCSHQDKEKGLHYHA) are Cytoplasmic-facing. A helical membrane pass occupies residues 185–205 (LFTGFGGALGYLLGAIDWAHL). The Extracellular portion of the chain corresponds to 206–216 (ELGRLLGTEFQ). Residues 217 to 237 (VMFFFSALVLTLCFTVHLCSI) form a helical membrane-spanning segment. The Cytoplasmic portion of the chain corresponds to 238-318 (SEAPLTEVAK…ALVNMPPHYR (81 aa)). The helical transmembrane segment at 319 to 339 (YLCISHLIGWTAFLSNMLFFT) threads the bilayer. Residues 340–366 (DFMGQIVYRGDPYSAHNSTEFLIYERG) lie on the Extracellular side of the membrane. N-linked (GlcNAc...) asparagine glycosylation occurs at N356. Residues 367-387 (VEVGCWGLCINSVFSSLYSYF) form a helical membrane-spanning segment. The Cytoplasmic segment spans residues 388–398 (QKVLVSYIGLK). The chain crosses the membrane as a helical span at residues 399 to 419 (GLYFTGYLLFGLGTGFIGLFP). At 420–425 (NVYSTL) the chain is on the extracellular side. A helical transmembrane segment spans residues 426–446 (VLCSLFGVMSSTLYTVPFNLI). Residues 447-477 (TEYHREEEKERQQAPGGDPDNSVRGKGMDCA) lie on the Cytoplasmic side of the membrane. A helical membrane pass occupies residues 478-498 (TLTCMVQLAQILVGGGLGFLV). The Extracellular portion of the chain corresponds to 499–504 (NTAGTV). A helical transmembrane segment spans residues 505–525 (VVVVITASAVALIGCCFVALF). The Cytoplasmic portion of the chain corresponds to 526 to 530 (VRYVD).

It belongs to the glycoside-pentoside-hexuronide (GPH) cation symporter transporter (TC 2.A.2) family. As to quaternary structure, interacts with TYRP1. As to expression, expressed in mature melanocytes.

The protein localises to the melanosome membrane. The enzyme catalyses sucrose(out) + H(+)(out) = sucrose(in) + H(+)(in). It carries out the reaction D-glucose(out) + H(+)(out) = D-glucose(in) + H(+)(in). In terms of biological role, proton-associated glucose and sucrose transporter. May be able to transport also fructose. Expressed at a late melanosome maturation stage where functions as proton/glucose exporter which increase lumenal pH by decreasing glycolysis. Regulates melanogenesis by maintaining melanosome neutralization that is initially initiated by transient OCA2 and required for a proper function of the tyrosinase TYR. The sequence is that of Membrane-associated transporter protein from Homo sapiens (Human).